The following is a 159-amino-acid chain: Cyclic pyranopterin monophosphate synthase (159 aa).

Residues 76–78 (LCH) and 114–115 (ME) each bind substrate. Aspartate 129 is an active-site residue.

Belongs to the MoaC family. As to quaternary structure, homohexamer; trimer of dimers.

The catalysed reaction is (8S)-3',8-cyclo-7,8-dihydroguanosine 5'-triphosphate = cyclic pyranopterin phosphate + diphosphate. The protein operates within cofactor biosynthesis; molybdopterin biosynthesis. Its function is as follows. Catalyzes the conversion of (8S)-3',8-cyclo-7,8-dihydroguanosine 5'-triphosphate to cyclic pyranopterin monophosphate (cPMP). In Clostridium botulinum (strain Alaska E43 / Type E3), this protein is Cyclic pyranopterin monophosphate synthase.